A 113-amino-acid chain; its full sequence is Large ribosomal subunit protein uL22 (113 aa).

This sequence belongs to the universal ribosomal protein uL22 family. As to quaternary structure, part of the 50S ribosomal subunit.

In terms of biological role, this protein binds specifically to 23S rRNA; its binding is stimulated by other ribosomal proteins, e.g. L4, L17, and L20. It is important during the early stages of 50S assembly. It makes multiple contacts with different domains of the 23S rRNA in the assembled 50S subunit and ribosome. Functionally, the globular domain of the protein is located near the polypeptide exit tunnel on the outside of the subunit, while an extended beta-hairpin is found that lines the wall of the exit tunnel in the center of the 70S ribosome. This Stenotrophomonas maltophilia (strain K279a) protein is Large ribosomal subunit protein uL22.